The sequence spans 353 residues: Anthranilate phosphoribosyltransferase (353 aa).

5-phospho-alpha-D-ribose 1-diphosphate is bound by residues G87, 90-91 (GD), T95, 97-100 (NIST), 115-123 (KHGNRAASS), and T127. G87 serves as a coordination point for anthranilate. S99 contributes to the Mg(2+) binding site. N118 serves as a coordination point for anthranilate. R173 is an anthranilate binding site. Mg(2+) contacts are provided by D231 and E232.

The protein belongs to the anthranilate phosphoribosyltransferase family. Homodimer. Requires Mg(2+) as cofactor.

The catalysed reaction is N-(5-phospho-beta-D-ribosyl)anthranilate + diphosphate = 5-phospho-alpha-D-ribose 1-diphosphate + anthranilate. It participates in amino-acid biosynthesis; L-tryptophan biosynthesis; L-tryptophan from chorismate: step 2/5. Its function is as follows. Catalyzes the transfer of the phosphoribosyl group of 5-phosphorylribose-1-pyrophosphate (PRPP) to anthranilate to yield N-(5'-phosphoribosyl)-anthranilate (PRA). The sequence is that of Anthranilate phosphoribosyltransferase from Salinispora arenicola (strain CNS-205).